We begin with the raw amino-acid sequence, 729 residues long: Catalase-peroxidase (729 aa).

A cross-link (tryptophyl-tyrosyl-methioninium (Trp-Tyr) (with M-243)) is located at residues 95 to 217 (WHSAGTYRIT…LAAVQMGLIY (123 aa)). His96 (proton acceptor) is an active-site residue. Positions 217-243 (YVNPEGPNGKPDPIAAATDIRETFFRM) form a cross-link, tryptophyl-tyrosyl-methioninium (Tyr-Met) (with W-95). His258 serves as a coordination point for heme b.

Belongs to the peroxidase family. Peroxidase/catalase subfamily. In terms of assembly, homodimer or homotetramer. Heme b serves as cofactor. In terms of processing, formation of the three residue Trp-Tyr-Met cross-link is important for the catalase, but not the peroxidase activity of the enzyme.

It catalyses the reaction H2O2 + AH2 = A + 2 H2O. The catalysed reaction is 2 H2O2 = O2 + 2 H2O. In terms of biological role, bifunctional enzyme with both catalase and broad-spectrum peroxidase activity. The sequence is that of Catalase-peroxidase from Nitrobacter hamburgensis (strain DSM 10229 / NCIMB 13809 / X14).